A 361-amino-acid chain; its full sequence is Peptide chain release factor 1 (361 aa).

Gln-235 is modified (N5-methylglutamine).

This sequence belongs to the prokaryotic/mitochondrial release factor family. In terms of processing, methylated by PrmC. Methylation increases the termination efficiency of RF1.

The protein localises to the cytoplasm. Peptide chain release factor 1 directs the termination of translation in response to the peptide chain termination codons UAG and UAA. In Rhodopseudomonas palustris (strain BisB18), this protein is Peptide chain release factor 1.